We begin with the raw amino-acid sequence, 83 residues long: Small ribosomal subunit protein uS17 (83 aa).

The protein belongs to the universal ribosomal protein uS17 family. Part of the 30S ribosomal subunit.

Functionally, one of the primary rRNA binding proteins, it binds specifically to the 5'-end of 16S ribosomal RNA. This chain is Small ribosomal subunit protein uS17, found in Acaryochloris marina (strain MBIC 11017).